Here is a 138-residue protein sequence, read N- to C-terminus: Prefoldin subunit alpha (138 aa).

This sequence belongs to the prefoldin subunit alpha family. Heterohexamer of two alpha and four beta subunits.

The protein resides in the cytoplasm. Functionally, molecular chaperone capable of stabilizing a range of proteins. Seems to fulfill an ATP-independent, HSP70-like function in archaeal de novo protein folding. The polypeptide is Prefoldin subunit alpha (Methanococcoides burtonii (strain DSM 6242 / NBRC 107633 / OCM 468 / ACE-M)).